The sequence spans 75 residues: Lipid-anchored plasma membrane protein CPP2 (75 aa).

The disordered stretch occupies residues 1 to 43 (MSQQQGYYQQGPPQQGYYQQGPPQQGYYQQGPPQQGYPQQQPV). Repeat copies occupy residues 4 to 13 (QQGYYQQGPP), 14 to 23 (QQGYYQQGPP), and 24 to 33 (QQGYYQQGPP). Residues 4–33 (QQGYYQQGPPQQGYYQQGPPQQGYYQQGPP) are 3 X 10 AA tandem repeats of Q-Q-G-Y-Y-Q-Q-G-P-P.

The protein belongs to the CYSTM1 family. Palmitoylated near the C-terminus.

The protein localises to the cell membrane. The sequence is that of Lipid-anchored plasma membrane protein CPP2 from Saccharomyces cerevisiae (strain ATCC 204508 / S288c) (Baker's yeast).